Consider the following 851-residue polypeptide: MQRLQRGLVLLLWAGLGILAITALASFYVDLAWFAELNALPVLWTRVLARWGLGLGAFAFALAVVGSNIRACWRGASTAGAWAIALGLSGGLAWSLSQHWFALLLWLHQVPVGESDPIFGRDLGFFLFGLPFWETLQQWCFNLVLLTLITVALIYLVELGLSEQRLTLALSLFAQRHLLILGGALFLLRAWGHWLERYELLYSTRGVVFGAGFADVHATLPATTLMSGVAFLTAVGFWALARQGIRFNLPLFKSWCPAWASSLLAPALLWGAYLGFGLLTTRLYPQLLQTLLVTPNELELERPYIEHNIRFTRAGFGLAEVEVKPFPEEGSLTWEILQQNQSTLRNVRLWDTEPLLATYRQLQEIRPYYQFPYVDVDRYRIGGELRQVMHAARELDFAQVPPAAQTWVNRRFFYTHGYGLTLSPVNVVTAEGLPDFFLSDIPPRVSPRYPEVAQVLRVEQPALYYSELTTTDVFVGAEARELDYPAADRYVYSSYRGTGGVPIPHLWQRLLYAWHFRDLRILLSRELSPSTRFLYRRQIRERVRQVMPFLLYDQDPYLVIQGGRLYWFFDAYTTSSRYPYSEHLPGFPFNYIRNSVKAVLDAYNGSIDWYIADPRDPLIQAYARIYPTLFKPLEAMPEPLRQHIRYPQDLFRVQVQQFATYHMTDPRVFYNREDQWQIPNQFRKRRRLPMQPQYLILTLPEDPQKGSPNQPEFVLLSPFTPLNKQNMVAWMAARCDGENYGKLLVYEFSKQRLIYGPEQVEARVNQDPAISEQIALWNEHGSRVNLGTLLVIPIETSLLYIQPLYLEAEQGRLPQLTRVIAAYEDRVVMEPTLSQALEALFSPTGSRRSNR.

7 consecutive transmembrane segments (helical) span residues 7–27 (GLVL…LASF), 47–67 (VLAR…VVGS), 76–96 (ASTA…AWSL), 141–161 (FNLV…ELGL), 168–188 (LALS…LFLL), 220–240 (LPAT…FWAL), and 259–279 (WASS…FGLL).

It belongs to the UPF0182 family.

Its subcellular location is the cell membrane. The sequence is that of UPF0182 protein CYA_1810 from Synechococcus sp. (strain JA-3-3Ab) (Cyanobacteria bacterium Yellowstone A-Prime).